The following is a 138-amino-acid chain: F-box protein At4g12382 (138 aa).

The F-box domain occupies 7–53 (NPSFADLPSSLIEVIMSHLALKNNIRASAACKSWYEVGVSVRVVEKH).

This chain is F-box protein At4g12382, found in Arabidopsis thaliana (Mouse-ear cress).